The following is a 520-amino-acid chain: 2-isopropylmalate synthase (520 aa).

Residues 12 to 274 (IRIFDTTLRD…DSAINTPRIV (263 aa)) enclose the Pyruvate carboxyltransferase domain. Mn(2+)-binding residues include Asp-21, His-209, His-211, and Asn-245. The regulatory domain stretch occupies residues 396–520 (RLASMTISDV…VIAGKTAAVA (125 aa)).

It belongs to the alpha-IPM synthase/homocitrate synthase family. LeuA type 1 subfamily. As to quaternary structure, homodimer. Requires Mn(2+) as cofactor.

It is found in the cytoplasm. The catalysed reaction is 3-methyl-2-oxobutanoate + acetyl-CoA + H2O = (2S)-2-isopropylmalate + CoA + H(+). Its pathway is amino-acid biosynthesis; L-leucine biosynthesis; L-leucine from 3-methyl-2-oxobutanoate: step 1/4. In terms of biological role, catalyzes the condensation of the acetyl group of acetyl-CoA with 3-methyl-2-oxobutanoate (2-ketoisovalerate) to form 3-carboxy-3-hydroxy-4-methylpentanoate (2-isopropylmalate). In Xanthomonas oryzae pv. oryzae (strain MAFF 311018), this protein is 2-isopropylmalate synthase.